The primary structure comprises 65 residues: Alpha-like toxin Bom4 (65 aa).

The region spanning 2 to 64 (RDAYIAQPEN…VPIRIPGKCH (63 aa)) is the LCN-type CS-alpha/beta domain. Intrachain disulfides connect cysteine 12/cysteine 63, cysteine 16/cysteine 36, cysteine 22/cysteine 46, and cysteine 26/cysteine 48.

This sequence belongs to the long (4 C-C) scorpion toxin superfamily. Sodium channel inhibitor family. Alpha subfamily. As to expression, expressed by the venom gland.

It is found in the secreted. Functionally, alpha toxins bind voltage-independently at site-3 of sodium channels (Nav) and inhibit the inactivation of the activated channels, thereby blocking neuronal transmission. This alpha-like toxin is highly toxic to mice and insects. In Buthus occitanus mardochei (Moroccan scorpion), this protein is Alpha-like toxin Bom4.